The sequence spans 404 residues: MKLPIYLDYSATTPVDPRVAEKMMQCLTLDGNFGNPASRSHRFGWHAEEAVDIARNQIAELVGADPREIVFTSGATESDNLAIKGAANFYQKKGKHIITSKTEHKAVLDTCRQLEREGFDVTYLAPKSNGIIDLKELEAAMRDDTILVSIMHVNNEIGVVQDIATIGEMCRARGIIYHVDATQSVGKLPIDLSQLKVDLMSFTGHKIYGPKGIGALYVRRKPRIRIEAQMHGGGHERGMRSGTLPVHQIVGMGEAYRIAKEEMETEMARLRTLRNRLWDGVKDMEEVYLNGDLEQGVPNILNVSFNYVEGESLIMALKDLAVSSGSACTSASLEPSYVLRALGMTDELAHSSIRFSLGRFTTEEEIDYTIKLVRNSIGRLRDLSPLWEMFKQGVDINSIEWSHH.

Pyridoxal 5'-phosphate contacts are provided by residues 75-76 (AT), Asn155, Gln183, and 203-205 (TGH). An N6-(pyridoxal phosphate)lysine modification is found at Lys206. Thr243 is a pyridoxal 5'-phosphate binding site. The Cysteine persulfide intermediate role is filled by Cys328. Cys328 contributes to the [2Fe-2S] cluster binding site.

This sequence belongs to the class-V pyridoxal-phosphate-dependent aminotransferase family. NifS/IscS subfamily. Homodimer. Forms a heterotetramer with IscU, interacts with other sulfur acceptors. Pyridoxal 5'-phosphate serves as cofactor.

The protein resides in the cytoplasm. The catalysed reaction is (sulfur carrier)-H + L-cysteine = (sulfur carrier)-SH + L-alanine. It functions in the pathway cofactor biosynthesis; iron-sulfur cluster biosynthesis. Master enzyme that delivers sulfur to a number of partners involved in Fe-S cluster assembly, tRNA modification or cofactor biosynthesis. Catalyzes the removal of elemental sulfur atoms from cysteine to produce alanine. Functions as a sulfur delivery protein for Fe-S cluster synthesis onto IscU, an Fe-S scaffold assembly protein, as well as other S acceptor proteins. In Enterobacter sp. (strain 638), this protein is Cysteine desulfurase IscS.